Consider the following 74-residue polypeptide: U12-theraphotoxin-Hs1a (74 aa).

Residues 1–20 (MNVKILLLLVGLNLVMHSNA) form the signal peptide. Positions 21–40 (TGDSETNPAETLFIEEIFRR) are excised as a propeptide. 3 cysteine pairs are disulfide-bonded: cysteine 42/cysteine 56, cysteine 49/cysteine 61, and cysteine 55/cysteine 71.

Belongs to the neurotoxin 35 family. In terms of tissue distribution, expressed by the venom gland.

The protein resides in the secreted. Functionally, putative ion channel inhibitor. The protein is U12-theraphotoxin-Hs1a of Cyriopagopus schmidti (Chinese bird spider).